We begin with the raw amino-acid sequence, 81 residues long: MKTLLLTLVVVTIVCLDLGYTMTCCNQQSSQPKTTKTCAESSCYKKTWRDHRGTITERGCGCPSVKPGIQLECCKTNECNN.

Positions 1–21 (MKTLLLTLVVVTIVCLDLGYT) are cleaved as a signal peptide. Disulfide bonds link Cys24–Cys43, Cys38–Cys60, Cys62–Cys73, and Cys74–Cys79.

The protein belongs to the three-finger toxin family. Short-chain subfamily. Type I alpha-neurotoxin sub-subfamily. In terms of tissue distribution, expressed by the venom gland.

The protein resides in the secreted. Functionally, binds to muscle nicotinic acetylcholine receptor (nAChR) and inhibit acetylcholine from binding to the receptor, thereby impairing neuromuscular transmission. The sequence is that of Short neurotoxin 1 from Hoplocephalus stephensii (Stephens's banded snake).